We begin with the raw amino-acid sequence, 384 residues long: Dual-specificity RNA methyltransferase RlmN (384 aa).

Glu105 (proton acceptor) is an active-site residue. One can recognise a Radical SAM core domain in the interval 111–350 (EDDRATLCVS…TIVRKTRGDD (240 aa)). Cys118 and Cys355 are joined by a disulfide. 3 residues coordinate [4Fe-4S] cluster: Cys125, Cys129, and Cys132. Residues 179-180 (GE), Ser211, 233-235 (SLH), and Asn312 contribute to the S-adenosyl-L-methionine site. Cys355 functions as the S-methylcysteine intermediate in the catalytic mechanism.

The protein belongs to the radical SAM superfamily. RlmN family. Requires [4Fe-4S] cluster as cofactor.

It is found in the cytoplasm. The catalysed reaction is adenosine(2503) in 23S rRNA + 2 reduced [2Fe-2S]-[ferredoxin] + 2 S-adenosyl-L-methionine = 2-methyladenosine(2503) in 23S rRNA + 5'-deoxyadenosine + L-methionine + 2 oxidized [2Fe-2S]-[ferredoxin] + S-adenosyl-L-homocysteine. It catalyses the reaction adenosine(37) in tRNA + 2 reduced [2Fe-2S]-[ferredoxin] + 2 S-adenosyl-L-methionine = 2-methyladenosine(37) in tRNA + 5'-deoxyadenosine + L-methionine + 2 oxidized [2Fe-2S]-[ferredoxin] + S-adenosyl-L-homocysteine. Its function is as follows. Specifically methylates position 2 of adenine 2503 in 23S rRNA and position 2 of adenine 37 in tRNAs. m2A2503 modification seems to play a crucial role in the proofreading step occurring at the peptidyl transferase center and thus would serve to optimize ribosomal fidelity. This chain is Dual-specificity RNA methyltransferase RlmN, found in Shigella flexneri serotype 5b (strain 8401).